The sequence spans 200 residues: Holliday junction resolvase RecU (200 aa).

The segment at 1 to 25 (MTIRYPNGKRYNQASQPQKTPIKTH) is disordered. The span at 10 to 25 (RYNQASQPQKTPIKTH) shows a compositional bias: polar residues. Mg(2+)-binding residues include threonine 85, aspartate 87, glutamate 100, and glutamine 119.

It belongs to the RecU family. It depends on Mg(2+) as a cofactor.

Its subcellular location is the cytoplasm. The enzyme catalyses Endonucleolytic cleavage at a junction such as a reciprocal single-stranded crossover between two homologous DNA duplexes (Holliday junction).. Functionally, endonuclease that resolves Holliday junction intermediates in genetic recombination. Cleaves mobile four-strand junctions by introducing symmetrical nicks in paired strands. Promotes annealing of linear ssDNA with homologous dsDNA. Required for DNA repair, homologous recombination and chromosome segregation. The chain is Holliday junction resolvase RecU from Bacillus cereus (strain G9842).